The following is a 485-amino-acid chain: Glutamate--tRNA ligase (485 aa).

Residues 11–21 (PSPTGHLHIGN) carry the 'HIGH' region motif. The 'KMSKS' region motif lies at 252–256 (KLSKR). K255 is a binding site for ATP.

The protein belongs to the class-I aminoacyl-tRNA synthetase family. Glutamate--tRNA ligase type 1 subfamily. In terms of assembly, monomer.

The protein localises to the cytoplasm. It carries out the reaction tRNA(Glu) + L-glutamate + ATP = L-glutamyl-tRNA(Glu) + AMP + diphosphate. Its function is as follows. Catalyzes the attachment of glutamate to tRNA(Glu) in a two-step reaction: glutamate is first activated by ATP to form Glu-AMP and then transferred to the acceptor end of tRNA(Glu). The protein is Glutamate--tRNA ligase of Bacillus licheniformis (strain ATCC 14580 / DSM 13 / JCM 2505 / CCUG 7422 / NBRC 12200 / NCIMB 9375 / NCTC 10341 / NRRL NRS-1264 / Gibson 46).